The sequence spans 648 residues: DNA gyrase subunit B (648 aa).

The Toprim domain maps to 427 to 541 (TELFIVEGDS…AGYVYIAQPP (115 aa)). Residues E433, D506, and D508 each contribute to the Mg(2+) site.

Belongs to the type II topoisomerase GyrB family. Heterotetramer, composed of two GyrA and two GyrB chains. In the heterotetramer, GyrA contains the active site tyrosine that forms a transient covalent intermediate with DNA, while GyrB binds cofactors and catalyzes ATP hydrolysis. Mg(2+) is required as a cofactor. The cofactor is Mn(2+). Ca(2+) serves as cofactor.

Its subcellular location is the cytoplasm. It catalyses the reaction ATP-dependent breakage, passage and rejoining of double-stranded DNA.. A type II topoisomerase that negatively supercoils closed circular double-stranded (ds) DNA in an ATP-dependent manner to modulate DNA topology and maintain chromosomes in an underwound state. Negative supercoiling favors strand separation, and DNA replication, transcription, recombination and repair, all of which involve strand separation. Also able to catalyze the interconversion of other topological isomers of dsDNA rings, including catenanes and knotted rings. Type II topoisomerases break and join 2 DNA strands simultaneously in an ATP-dependent manner. The chain is DNA gyrase subunit B from Streptococcus pneumoniae serotype 4 (strain ATCC BAA-334 / TIGR4).